The following is a 602-amino-acid chain: Laccase 1 (602 aa).

Residues 1-20 (MDHFARVSLVAALLYTNTWA) form the signal peptide. 2 Plastocyanin-like domains span residues 30–128 (TWEE…VRPK) and 157–345 (YLVV…RIPN). The Cu cation site is built by His78, His80, His108, and His110. 7 N-linked (GlcNAc...) asparagine glycosylation sites follow: Asn176, Asn241, Asn264, Asn388, Asn430, Asn454, and Asn470. The Plastocyanin-like 3 domain maps to 461 to 584 (NEGLLLRTRN…GGMGMVIMDG (124 aa)). Residues His492, His495, and His497 each coordinate Cu cation. An N-linked (GlcNAc...) asparagine glycan is attached at Asn512. Positions 566, 567, 568, and 572 each coordinate Cu cation.

This sequence belongs to the multicopper oxidase family. The cofactor is Cu cation.

It localises to the cell surface. Its pathway is pigment biosynthesis. Functionally, laccase; part of the Pks1 gene cluster that mediates the biosynthesis of an anthraquinone derivative pigment that contributes to conidial pigmentation that provides protection from UV radiation, heat and cold stress. The polyketide synthase Pks1 produces 1-acetyl-2,4,6,8-tetrahydroxy-9,10-anthraquinone though condensation of acetyl-CoA with malonyl-CoA. The dehydratase EthD and the laccase Mlac1 further convert the anthraquinone derivative into the final conidial pigment. The sequence is that of Laccase 1 from Metarhizium album (strain ARSEF 1941).